The primary structure comprises 412 residues: 2,3-bisphosphoglycerate-independent phosphoglycerate mutase (412 aa).

Belongs to the BPG-independent phosphoglycerate mutase family. A-PGAM subfamily.

It catalyses the reaction (2R)-2-phosphoglycerate = (2R)-3-phosphoglycerate. Its pathway is carbohydrate degradation; glycolysis; pyruvate from D-glyceraldehyde 3-phosphate: step 3/5. In terms of biological role, catalyzes the interconversion of 2-phosphoglycerate and 3-phosphoglycerate. In Methanobrevibacter smithii (strain ATCC 35061 / DSM 861 / OCM 144 / PS), this protein is 2,3-bisphosphoglycerate-independent phosphoglycerate mutase.